Here is a 1138-residue protein sequence, read N- to C-terminus: Eukaryotic translation initiation factor 3 subunit A (1138 aa).

In terms of domain architecture, PCI spans Leu-319–Thr-502. 2 disordered regions span residues Asn-590–Gln-633 and Glu-817–Arg-1138. 4 stretches are compositionally biased toward basic and acidic residues: residues Glu-817–Arg-903, Asp-923–Asp-967, Gly-1003–Gln-1049, and Asp-1058–Arg-1078. Gly residues predominate over residues Pro-1082–Asn-1100. A compositionally biased stretch (basic and acidic residues) spans Pro-1107–Asp-1128.

This sequence belongs to the eIF-3 subunit A family. In terms of assembly, component of the eukaryotic translation initiation factor 3 (eIF-3) complex. The eIF-3 complex interacts with pix.

The protein localises to the cytoplasm. Functionally, RNA-binding component of the eukaryotic translation initiation factor 3 (eIF-3) complex, which is involved in protein synthesis of a specialized repertoire of mRNAs and, together with other initiation factors, stimulates binding of mRNA and methionyl-tRNAi to the 40S ribosome. The eIF-3 complex specifically targets and initiates translation of a subset of mRNAs involved in cell proliferation. The chain is Eukaryotic translation initiation factor 3 subunit A from Drosophila virilis (Fruit fly).